A 315-amino-acid polypeptide reads, in one-letter code: MASSSYTSLLVLVALVTAASAQLSPTFYDTSCPRALATIKSGVMAAVTSDPRMGASLLRLHFHDCFVQGCDASVLLSGMEQNAIPNAGSLRGFGVIDSIKTQIEAICKQTVSCADILTVAARDSVVALGGPSWTVPLGRRDSIDANENEANTDLPGFNSSRAELEAAFLKKGGLNTVDMVALSGAHTIGQAQCSTFRARIYGGDTNINAAYAASLRANCPQTVGSGDGSLANLDTTTANTFDNAYYTNLMSQKGLLHSDQVLFNNDTTDNTVRNFASNPAAFSSSFTTAMIKMGNIAPKTGTQGQIRLSCSRVNS.

Residues 1-21 (MASSSYTSLLVLVALVTAASA) form the signal peptide. Gln-22 is subject to Pyrrolidone carboxylic acid. 4 cysteine pairs are disulfide-bonded: Cys-32-Cys-107, Cys-65-Cys-70, Cys-113-Cys-310, and Cys-193-Cys-219. Catalysis depends on His-63, which acts as the Proton acceptor. Residues Asp-64, Val-67, Gly-69, Asp-71, and Ser-73 each contribute to the Ca(2+) site. A substrate-binding site is contributed by Pro-155. N-linked (GlcNAc...) asparagine glycosylation is present at Asn-158. Heme b is bound at residue His-186. Thr-187 contributes to the Ca(2+) binding site. 3 residues coordinate Ca(2+): Asp-234, Thr-237, and Asp-242. Asn-265 carries N-linked (GlcNAc...) asparagine glycosylation.

This sequence belongs to the peroxidase family. Classical plant (class III) peroxidase subfamily. Requires Ca(2+) as cofactor. It depends on heme b as a cofactor.

It is found in the secreted. The enzyme catalyses 2 a phenolic donor + H2O2 = 2 a phenolic radical donor + 2 H2O. Its function is as follows. Removal of H(2)O(2), oxidation of toxic reductants, biosynthesis and degradation of lignin, suberization, auxin catabolism, response to environmental stresses such as wounding, pathogen attack and oxidative stress. These functions might be dependent on each isozyme/isoform in each plant tissue. Functionally, involved in defense response to powdery meldew fungus. The sequence is that of Peroxidase 1 from Hordeum vulgare (Barley).